Here is a 692-residue protein sequence, read N- to C-terminus: Sodium- and chloride-dependent glycine transporter 1 (692 aa).

The disordered stretch occupies residues 1 to 34 (MIGGDTRAASAHPGMASAQGPVATPSPEQPFPGT). Residues 1–94 (MIGGDTRAAS…TRGNWGNQIE (94 aa)) lie on the Cytoplasmic side of the membrane. The next 3 helical transmembrane spans lie at 95–115 (FVLT…FPYL), 122–142 (GAFM…LFFM), and 174–194 (VSTY…YYFF). Topologically, residues 195-271 (SSMTHVLPWA…LSDDIGNFGE (77 aa)) are extracellular. 9 consecutive transmembrane segments (helical) span residues 272–292 (VRLP…LCLI), 301–321 (VVYF…VRGV), 346–366 (VWGD…GGLI), 393–413 (SVYA…HLGV), 436–456 (LLPI…LLGL), 492–512 (VAGF…WLLL), 516–536 (YAAS…IMYI), 556–576 (LFFQ…ILIF), and 596–616 (VAIG…YALF). Residues 617–692 (QLCRTDGDTL…GSSRFQDSRI (76 aa)) are Cytoplasmic-facing. Thr657 carries the post-translational modification Phosphothreonine. A phosphoserine mark is found at Ser659 and Ser684. Residues 681–692 (SNGSSRFQDSRI) form an essential for interaction with EXOC1 region.

It belongs to the sodium:neurotransmitter symporter (SNF) (TC 2.A.22) family. SLC6A9 subfamily. Interacts with EXOC1; interaction increases the transporter capacity of SLC6A9 probably by promoting its insertion into the cell membrane. Interacts with EXOC3 and EXOC4. In terms of tissue distribution, expressed in the brain (at protein level). At 11 dpc, expressed in the ventral part of the ventricular zone. At 15 dpc, also expressed in adjacent mantle tissue and the meninges. Strongly expressed in 12 dpc and 15 dpc liver. As to expression, expressed in the brain.

It is found in the cell membrane. It catalyses the reaction glycine(out) + chloride(out) + 2 Na(+)(out) = glycine(in) + chloride(in) + 2 Na(+)(in). Functionally, sodium- and chloride-dependent glycine transporter which is essential for regulating glycine concentrations at inhibitory glycinergic synapses. Its function is as follows. Sodium- and chloride-dependent glycine transporter. This chain is Sodium- and chloride-dependent glycine transporter 1 (Slc6a9), found in Mus musculus (Mouse).